Here is a 370-residue protein sequence, read N- to C-terminus: UDP-N-acetylglucosamine--N-acetylmuramyl-(pentapeptide) pyrophosphoryl-undecaprenol N-acetylglucosamine transferase (370 aa).

UDP-N-acetyl-alpha-D-glucosamine is bound by residues 15 to 17 (TGG), Asn-126, Arg-169, Ser-197, and Gln-299.

This sequence belongs to the glycosyltransferase 28 family. MurG subfamily.

The protein localises to the cell inner membrane. It catalyses the reaction di-trans,octa-cis-undecaprenyl diphospho-N-acetyl-alpha-D-muramoyl-L-alanyl-D-glutamyl-meso-2,6-diaminopimeloyl-D-alanyl-D-alanine + UDP-N-acetyl-alpha-D-glucosamine = di-trans,octa-cis-undecaprenyl diphospho-[N-acetyl-alpha-D-glucosaminyl-(1-&gt;4)]-N-acetyl-alpha-D-muramoyl-L-alanyl-D-glutamyl-meso-2,6-diaminopimeloyl-D-alanyl-D-alanine + UDP + H(+). Its pathway is cell wall biogenesis; peptidoglycan biosynthesis. In terms of biological role, cell wall formation. Catalyzes the transfer of a GlcNAc subunit on undecaprenyl-pyrophosphoryl-MurNAc-pentapeptide (lipid intermediate I) to form undecaprenyl-pyrophosphoryl-MurNAc-(pentapeptide)GlcNAc (lipid intermediate II). The polypeptide is UDP-N-acetylglucosamine--N-acetylmuramyl-(pentapeptide) pyrophosphoryl-undecaprenol N-acetylglucosamine transferase (Methylorubrum populi (strain ATCC BAA-705 / NCIMB 13946 / BJ001) (Methylobacterium populi)).